A 358-amino-acid chain; its full sequence is Pyruvate dehydrogenase E1 component subunit alpha (358 aa).

In terms of assembly, heterodimer of an alpha and a beta chain. Thiamine diphosphate is required as a cofactor.

The enzyme catalyses N(6)-[(R)-lipoyl]-L-lysyl-[protein] + pyruvate + H(+) = N(6)-[(R)-S(8)-acetyldihydrolipoyl]-L-lysyl-[protein] + CO2. In terms of biological role, the pyruvate dehydrogenase complex catalyzes the overall conversion of pyruvate to acetyl-CoA and CO(2). It contains multiple copies of three enzymatic components: pyruvate dehydrogenase (E1), dihydrolipoamide acetyltransferase (E2) and lipoamide dehydrogenase (E3). This Mycoplasma genitalium (strain ATCC 33530 / DSM 19775 / NCTC 10195 / G37) (Mycoplasmoides genitalium) protein is Pyruvate dehydrogenase E1 component subunit alpha (pdhA).